Reading from the N-terminus, the 370-residue chain is Protein TEEBE (370 aa).

The signal sequence occupies residues 1-21; the sequence is MSLYHSLSIFLLLSLCHGSYS. The N-linked (GlcNAc...) asparagine glycan is linked to asparagine 215.

In terms of tissue distribution, expressed in primary and lateral roots, stigmatic papillae and hypocotyls.

It localises to the secreted. The protein resides in the cell wall. Functionally, prevents hypocotyl epidermal cells elongation by modulating the pectin status in cell walls. Likely regulates pectin methylesterification degree during cell separation and elongation, including upon root-knot nematode Meloidogyne incognita infection. This Arabidopsis thaliana (Mouse-ear cress) protein is Protein TEEBE.